The primary structure comprises 414 residues: Serine hydroxymethyltransferase (414 aa).

(6S)-5,6,7,8-tetrahydrofolate is bound by residues Leu121 and 125–127; that span reads GHL. Lys229 carries the N6-(pyridoxal phosphate)lysine modification.

It belongs to the SHMT family. In terms of assembly, homodimer. Pyridoxal 5'-phosphate is required as a cofactor.

Its subcellular location is the cytoplasm. It carries out the reaction (6R)-5,10-methylene-5,6,7,8-tetrahydrofolate + glycine + H2O = (6S)-5,6,7,8-tetrahydrofolate + L-serine. It functions in the pathway one-carbon metabolism; tetrahydrofolate interconversion. Its pathway is amino-acid biosynthesis; glycine biosynthesis; glycine from L-serine: step 1/1. Catalyzes the reversible interconversion of serine and glycine with tetrahydrofolate (THF) serving as the one-carbon carrier. This reaction serves as the major source of one-carbon groups required for the biosynthesis of purines, thymidylate, methionine, and other important biomolecules. Also exhibits THF-independent aldolase activity toward beta-hydroxyamino acids, producing glycine and aldehydes, via a retro-aldol mechanism. This is Serine hydroxymethyltransferase from Acidovorax ebreus (strain TPSY) (Diaphorobacter sp. (strain TPSY)).